Here is a 545-residue protein sequence, read N- to C-terminus: Chaperonin GroEL (545 aa).

ATP contacts are provided by residues 29–32 (TLGP), Lys-50, 86–90 (DGTTT), Gly-413, 479–481 (NAA), and Asp-496. The segment at 525–545 (KPEKEKAPAAAGAPDMGGMDF) is disordered. Residues 532–545 (PAAAGAPDMGGMDF) show a composition bias toward low complexity.

The protein belongs to the chaperonin (HSP60) family. Forms a cylinder of 14 subunits composed of two heptameric rings stacked back-to-back. Interacts with the co-chaperonin GroES.

Its subcellular location is the cytoplasm. The catalysed reaction is ATP + H2O + a folded polypeptide = ADP + phosphate + an unfolded polypeptide.. In terms of biological role, together with its co-chaperonin GroES, plays an essential role in assisting protein folding. The GroEL-GroES system forms a nano-cage that allows encapsulation of the non-native substrate proteins and provides a physical environment optimized to promote and accelerate protein folding. This is Chaperonin GroEL from Deinococcus geothermalis (strain DSM 11300 / CIP 105573 / AG-3a).